The sequence spans 33 residues: Antimicrobial peptide MBP-1 (33 aa).

As to expression, predominantly in the embryo portion of the kernel.

The protein localises to the secreted. Inhibitor of both bacterial and fungal growth in vitro. This is Antimicrobial peptide MBP-1 from Zea mays (Maize).